The primary structure comprises 94 residues: MRLRSPYWLFVVLILALAGLQYRLWVGDGSLAQVRDLQKQIADQHGENERLLERNRILEAEVAELKKGTETVEERARHELGMVKDGETLYQLAK.

Residues 1-8 (MRLRSPYW) lie on the Cytoplasmic side of the membrane. The chain crosses the membrane as a helical span at residues 9–26 (LFVVLILALAGLQYRLWV). Residues 27 to 94 (GDGSLAQVRD…DGETLYQLAK (68 aa)) lie on the Periplasmic side of the membrane. Residues 31–78 (LAQVRDLQKQIADQHGENERLLERNRILEAEVAELKKGTETVEERARH) adopt a coiled-coil conformation.

Belongs to the FtsB family. In terms of assembly, part of a complex composed of FtsB, FtsL and FtsQ.

It localises to the cell inner membrane. Its function is as follows. Essential cell division protein. May link together the upstream cell division proteins, which are predominantly cytoplasmic, with the downstream cell division proteins, which are predominantly periplasmic. The protein is Cell division protein FtsB of Pseudomonas aeruginosa (strain ATCC 15692 / DSM 22644 / CIP 104116 / JCM 14847 / LMG 12228 / 1C / PRS 101 / PAO1).